The following is a 231-amino-acid chain: Cytidylate kinase (231 aa).

11-19 contacts ATP; the sequence is GHSSCGKST.

The protein belongs to the cytidylate kinase family. Type 1 subfamily.

It localises to the cytoplasm. It catalyses the reaction CMP + ATP = CDP + ADP. The catalysed reaction is dCMP + ATP = dCDP + ADP. The polypeptide is Cytidylate kinase (Porphyromonas gingivalis (strain ATCC BAA-308 / W83)).